Reading from the N-terminus, the 369-residue chain is Transcription initiation factor IIA large subunit (369 aa).

Polar residues-rich tracts occupy residues 113–210 and 218–233; these read HGNS…QNSP and TESS…NDVP. The segment at 113 to 248 is disordered; that stretch reads HGNSNYYSPP…IHDLDDAGSP (136 aa). Serine 249 is subject to Phosphoserine. The interval 282–319 is disordered; sequence IEDNEDEKKPPVDTPSDEAINSDLDDPDSDEAPETEEG. The segment covering 304-319 has biased composition (acidic residues); that stretch reads DLDDPDSDEAPETEEG.

It belongs to the TFIIA subunit 1 family. In terms of assembly, TFIIA is a heterodimer of the large subunit and the small subunit gamma.

It is found in the nucleus. TFIIA is a component of the transcription machinery of RNA polymerase II and plays an important role in transcriptional activation. TFIIA in a complex with tbp mediates transcriptional activity. The chain is Transcription initiation factor IIA large subunit from Schizosaccharomyces pombe (strain 972 / ATCC 24843) (Fission yeast).